We begin with the raw amino-acid sequence, 289 residues long: tRNA pseudouridine synthase A (289 aa).

D53 (nucleophile) is an active-site residue. Y119 is a binding site for substrate.

This sequence belongs to the tRNA pseudouridine synthase TruA family. As to quaternary structure, homodimer.

The enzyme catalyses uridine(38/39/40) in tRNA = pseudouridine(38/39/40) in tRNA. In terms of biological role, formation of pseudouridine at positions 38, 39 and 40 in the anticodon stem and loop of transfer RNAs. This chain is tRNA pseudouridine synthase A, found in Corynebacterium glutamicum (strain ATCC 13032 / DSM 20300 / JCM 1318 / BCRC 11384 / CCUG 27702 / LMG 3730 / NBRC 12168 / NCIMB 10025 / NRRL B-2784 / 534).